The sequence spans 898 residues: Cip1-interacting zinc finger protein (898 aa).

Disordered stretches follow at residues 48 to 69 (QAPL…QPLL), 157 to 305 (QSLL…ALEA), and 318 to 471 (VQAQ…QPQV). Positions 170–203 (NPSQFNLSGRNPQKQARTSSSTTPNRKDSSSQTM) are enriched in polar residues. The residue at position 209 (serine 209) is a Phosphoserine. Position 244 is a phosphothreonine (threonine 244). A compositionally biased stretch (basic and acidic residues) spans 263-273 (RSSEEPTEKEP). Residue lysine 280 forms a Glycyl lysine isopeptide (Lys-Gly) (interchain with G-Cter in SUMO2) linkage. Positions 318 to 327 (VQAQVQSQTQ) are enriched in low complexity. Residues 328–351 (PRIPSTDTQVQPKLQKQAQTQTSP) are compositionally biased toward polar residues. A Glycyl lysine isopeptide (Lys-Gly) (interchain with G-Cter in SUMO2) cross-link involves residue lysine 340. A Phosphoserine modification is found at serine 350. The span at 355–383 (VLQQKQVQPQLQQEAEPQKQVQPQVQPQA) shows a compositional bias: low complexity. Residues 384–395 (HSQGPRQVQLQQ) are compositionally biased toward polar residues. Lysine 401 is covalently cross-linked (Glycyl lysine isopeptide (Lys-Gly) (interchain with G-Cter in SUMO2)). Over residues 402–435 (QVQPQVQPQAHSQPPRQVQLQLQKQVQTQTYPQV) the composition is skewed to low complexity. Residues 436-445 (HTQAQPSVQP) show a composition bias toward polar residues. At serine 547 the chain carries Phosphoserine. A Glycyl lysine isopeptide (Lys-Gly) (interchain with G-Cter in SUMO2) cross-link involves residue lysine 549. The tract at residues 562-584 (STVPLTPVPRPSDSVSSTPAATS) is disordered. Threonine 567 is subject to Phosphothreonine. The span at 572–584 (PSDSVSSTPAATS) shows a compositional bias: low complexity. Glycyl lysine isopeptide (Lys-Gly) (interchain with G-Cter in SUMO2) cross-links involve residues lysine 588, lysine 680, and lysine 705. The Matrin-type zinc-finger motif lies at 799–830 (YICRICHKFYHSNSGAQLSHCKSLGHFENLQK). Serine 821 carries the phosphoserine modification. A Glycyl lysine isopeptide (Lys-Gly) (interchain with G-Cter in SUMO2) cross-link involves residue lysine 830. At serine 838 the chain carries Phosphoserine. Positions 859–879 (LFTSSGRPPSQPNTQDKTPSK) are enriched in polar residues. The interval 859-898 (LFTSSGRPPSQPNTQDKTPSKVTARPSQPPLPRRSTRLKT) is disordered. Lysine 879 participates in a covalent cross-link: Glycyl lysine isopeptide (Lys-Gly) (interchain with G-Cter in SUMO2).

As to quaternary structure, interacts with CIP/WAF1.

It is found in the nucleus. Functionally, may regulate the subcellular localization of CIP/WAF1. This chain is Cip1-interacting zinc finger protein (CIZ1), found in Homo sapiens (Human).